Reading from the N-terminus, the 650-residue chain is Chaperone protein DnaK (650 aa).

Thr-200 carries the post-translational modification Phosphothreonine; by autocatalysis. Low complexity predominate over residues 612–636; sequence QQAGAAGAAGAAEGAAHAGGAQQAA. The disordered stretch occupies residues 612 to 650; sequence QQAGAAGAAGAAEGAAHAGGAQQAADDVVDAEFKEVKKD.

The protein belongs to the heat shock protein 70 family.

Acts as a chaperone. The protein is Chaperone protein DnaK of Burkholderia ambifaria (strain ATCC BAA-244 / DSM 16087 / CCUG 44356 / LMG 19182 / AMMD) (Burkholderia cepacia (strain AMMD)).